The chain runs to 525 residues: Zinc finger protein 678 (525 aa).

14 consecutive C2H2-type zinc fingers follow at residues 97–119 (FQCI…KRIH), 125–147 (YKCE…KRIH), 153–175 (YKCD…KKIH), 181–203 (YKCD…KKIH), 209–231 (YPCE…KRIH), 237–259 (YKCK…KRIH), 265–287 (YKCE…RRIH), 293–315 (YKCE…KRIH), 321–343 (YQCE…KRIH), 349–371 (YKCE…KRIH), 377–399 (YKCK…RRIH), 405–427 (YKCE…KRIH), 433–455 (YKCK…KRIH), and 461–483 (YKCE…KRIH). The segment at 489–511 (YKCKECGKGFYQSSIHSKYKRIY) adopts a C2H2-type 15; degenerate zinc-finger fold.

Belongs to the krueppel C2H2-type zinc-finger protein family.

It localises to the nucleus. Its function is as follows. May be involved in transcriptional regulation. In Homo sapiens (Human), this protein is Zinc finger protein 678 (ZNF678).